Consider the following 140-residue polypeptide: Large ribosomal subunit protein uL11 (140 aa).

This sequence belongs to the universal ribosomal protein uL11 family. Part of the ribosomal stalk of the 50S ribosomal subunit. Interacts with L10 and the large rRNA to form the base of the stalk. L10 forms an elongated spine to which L12 dimers bind in a sequential fashion forming a multimeric L10(L12)X complex. In terms of processing, one or more lysine residues are methylated.

In terms of biological role, forms part of the ribosomal stalk which helps the ribosome interact with GTP-bound translation factors. In Thermoanaerobacter pseudethanolicus (strain ATCC 33223 / 39E) (Clostridium thermohydrosulfuricum), this protein is Large ribosomal subunit protein uL11.